Reading from the N-terminus, the 265-residue chain is Phosphate import ATP-binding protein PstB (265 aa).

An ABC transporter domain is found at 18–260 (ISARDVQVFY…PEDPRTESYI (243 aa)). 50–57 (GPSGCGKS) is a binding site for ATP.

Belongs to the ABC transporter superfamily. Phosphate importer (TC 3.A.1.7) family. In terms of assembly, the complex is composed of two ATP-binding proteins (PstB), two transmembrane proteins (PstC and PstA) and a solute-binding protein (PstS).

It localises to the cell inner membrane. The enzyme catalyses phosphate(out) + ATP + H2O = ADP + 2 phosphate(in) + H(+). In terms of biological role, part of the ABC transporter complex PstSACB involved in phosphate import. Responsible for energy coupling to the transport system. The chain is Phosphate import ATP-binding protein PstB from Roseobacter denitrificans (strain ATCC 33942 / OCh 114) (Erythrobacter sp. (strain OCh 114)).